Reading from the N-terminus, the 277-residue chain is Putative thiosulfate sulfurtransferase (277 aa).

Rhodanese domains lie at 18–125 and 154–274; these read KAPK…PLSA and AIGT…APIE. Residue Lys-67 forms an Isoglutamyl lysine isopeptide (Lys-Gln) (interchain with Q-Cter in protein Pup) linkage. The active-site Cysteine persulfide intermediate is Cys-233. Substrate is bound at residue Arg-238.

The enzyme catalyses thiosulfate + hydrogen cyanide = thiocyanate + sulfite + 2 H(+). Functionally, may be a sulfotransferase involved in the formation of thiosulfate. This chain is Putative thiosulfate sulfurtransferase, found in Mycolicibacterium smegmatis (strain ATCC 700084 / mc(2)155) (Mycobacterium smegmatis).